We begin with the raw amino-acid sequence, 164 residues long: Transcription elongation factor GreA (164 aa).

The stretch at E11–V76 forms a coiled coil.

The protein belongs to the GreA/GreB family.

Its function is as follows. Necessary for efficient RNA polymerase transcription elongation past template-encoded arresting sites. The arresting sites in DNA have the property of trapping a certain fraction of elongating RNA polymerases that pass through, resulting in locked ternary complexes. Cleavage of the nascent transcript by cleavage factors such as GreA or GreB allows the resumption of elongation from the new 3'terminus. GreA releases sequences of 2 to 3 nucleotides. The sequence is that of Transcription elongation factor GreA from Mycolicibacterium vanbaalenii (strain DSM 7251 / JCM 13017 / BCRC 16820 / KCTC 9966 / NRRL B-24157 / PYR-1) (Mycobacterium vanbaalenii).